The following is a 146-amino-acid chain: Putative pre-16S rRNA nuclease (146 aa).

This sequence belongs to the YqgF nuclease family.

It localises to the cytoplasm. In terms of biological role, could be a nuclease involved in processing of the 5'-end of pre-16S rRNA. In Pediococcus pentosaceus (strain ATCC 25745 / CCUG 21536 / LMG 10740 / 183-1w), this protein is Putative pre-16S rRNA nuclease.